Here is a 61-residue protein sequence, read N- to C-terminus: Progonadoliberin-1 (61 aa).

Gln1 bears the Pyrrolidone carboxylic acid mark. Residue Gly10 is modified to Glycine amide.

It belongs to the GnRH family.

The protein resides in the secreted. Functionally, stimulates the secretion of gonadotropins; it stimulates the secretion of both luteinizing and follicle-stimulating hormones. This Ovis aries (Sheep) protein is Progonadoliberin-1 (GNRH1).